The chain runs to 63 residues: Large ribosomal subunit protein uL30 (63 aa).

This sequence belongs to the universal ribosomal protein uL30 family. As to quaternary structure, part of the 50S ribosomal subunit.

The chain is Large ribosomal subunit protein uL30 from Geobacillus stearothermophilus (Bacillus stearothermophilus).